The primary structure comprises 148 residues: Deoxyuridine 5'-triphosphate nucleotidohydrolase (148 aa).

Substrate contacts are provided by residues 67–69 (RSG), N80, 84–86 (LID), and M94.

Belongs to the dUTPase family. Mg(2+) is required as a cofactor.

The catalysed reaction is dUTP + H2O = dUMP + diphosphate + H(+). It participates in pyrimidine metabolism; dUMP biosynthesis; dUMP from dCTP (dUTP route): step 2/2. Its function is as follows. This enzyme is involved in nucleotide metabolism: it produces dUMP, the immediate precursor of thymidine nucleotides and it decreases the intracellular concentration of dUTP so that uracil cannot be incorporated into DNA. This is Deoxyuridine 5'-triphosphate nucleotidohydrolase from Ralstonia nicotianae (strain ATCC BAA-1114 / GMI1000) (Ralstonia solanacearum).